The primary structure comprises 161 residues: Tick receptor for ospA (161 aa).

Interacts with ospA protein from B.burgdorferi. Post-translationally, glycosylated. In terms of tissue distribution, specifically expressed in gut. Localizes predominantly in the intercellular spaces and luminal surface of the gut. In the gut, it localizes along tight junctions. Not expressed in salivary gland or hemolymph.

It localises to the cell membrane. Functionally, serves as a receptor for ospA protein of B.burgdorferi, the Lyme disease agent. Required for spirochetal colonization. Essential for pathogen adherence to the vector. This chain is Tick receptor for ospA (TROSPA), found in Ixodes scapularis (Black-legged tick).